The chain runs to 321 residues: Peptide transport system permease protein SapB (321 aa).

8 helical membrane-spanning segments follow: residues 8-28 (HILW…VILL), 41-61 (IYIG…GITY), 82-102 (CFIT…ISAV), 117-137 (YVGL…VAAL), 150-170 (LLYE…FMEV), 180-200 (ILQH…MEII), 249-269 (VFTL…WPGI), and 289-309 (VIVI…FTFI). An ABC transmembrane type-1 domain is found at 75–303 (LPPTLELCFI…VCIILIDTFT (229 aa)).

The protein belongs to the binding-protein-dependent transport system permease family. OppBC subfamily.

Its subcellular location is the cell inner membrane. Functionally, involved in a peptide intake transport system that plays a role in the resistance to antimicrobial peptides. This Haemophilus influenzae (strain ATCC 51907 / DSM 11121 / KW20 / Rd) protein is Peptide transport system permease protein SapB (sapB).